The chain runs to 96 residues: MKIRPLHDRVVVRRLEEERTSAGGIVIPDSAAEKPSRGEVISVGPGKPLDNGEVRSLDVKVGDQILFGKYAGTEVKLAGDEYIVMREDDIMGVIEK.

The protein belongs to the GroES chaperonin family. In terms of assembly, heptamer of 7 subunits arranged in a ring. Interacts with the chaperonin GroEL.

Its subcellular location is the cytoplasm. Functionally, together with the chaperonin GroEL, plays an essential role in assisting protein folding. The GroEL-GroES system forms a nano-cage that allows encapsulation of the non-native substrate proteins and provides a physical environment optimized to promote and accelerate protein folding. GroES binds to the apical surface of the GroEL ring, thereby capping the opening of the GroEL channel. In Coxiella burnetii (strain Dugway 5J108-111), this protein is Co-chaperonin GroES.